Here is a 95-residue protein sequence, read N- to C-terminus: Large ribosomal subunit protein bL28 (95 aa).

The tract at residues 1 to 22 (MSRRCELTGKGPMTGNNVSHAN) is disordered.

The protein belongs to the bacterial ribosomal protein bL28 family.

This Ruegeria pomeroyi (strain ATCC 700808 / DSM 15171 / DSS-3) (Silicibacter pomeroyi) protein is Large ribosomal subunit protein bL28.